The chain runs to 190 residues: Elongation factor P (190 aa).

The protein belongs to the elongation factor P family.

The protein resides in the cytoplasm. The protein operates within protein biosynthesis; polypeptide chain elongation. Its function is as follows. Involved in peptide bond synthesis. Stimulates efficient translation and peptide-bond synthesis on native or reconstituted 70S ribosomes in vitro. Probably functions indirectly by altering the affinity of the ribosome for aminoacyl-tRNA, thus increasing their reactivity as acceptors for peptidyl transferase. This Pseudomonas fluorescens (strain SBW25) protein is Elongation factor P.